The following is a 298-amino-acid chain: Probable tRNA(His) guanylyltransferase (298 aa).

Positions 58, 59, and 105 each coordinate Mg(2+). Residues 58-63 (DGRNFH) and 104-105 (SD) contribute to the GTP site.

It belongs to the tRNA(His) guanylyltransferase family. Homotetramer. Interacts with MFN1 and MFN2; functions as a guanyl-nucleotide exchange factor/GEF for MFN2 and also probably MFN1. The cofactor is Mg(2+).

It localises to the cytoplasm. The protein localises to the mitochondrion. The enzyme catalyses a 5'-end ribonucleotide-tRNA(His) + GTP + ATP + H2O = a 5'-end phospho-guanosine-ribonucleotide-tRNA(His) + AMP + 2 diphosphate + H(+). Functionally, adds a GMP to the 5'-end of tRNA(His) after transcription and RNase P cleavage. This step is essential for proper recognition of the tRNA and for the fidelity of protein synthesis. Also functions as a guanyl-nucleotide exchange factor/GEF for the MFN1 and MFN2 mitofusins thereby regulating mitochondrial fusion. By regulating both mitochondrial dynamics and bioenergetic function, it contributes to cell survival following oxidative stress. In Mus musculus (Mouse), this protein is Probable tRNA(His) guanylyltransferase (Thg1l).